Here is a 143-residue protein sequence, read N- to C-terminus: Large ribosomal subunit protein uL11 (143 aa).

The protein belongs to the universal ribosomal protein uL11 family. In terms of assembly, part of the ribosomal stalk of the 50S ribosomal subunit. Interacts with L10 and the large rRNA to form the base of the stalk. L10 forms an elongated spine to which L12 dimers bind in a sequential fashion forming a multimeric L10(L12)X complex. One or more lysine residues are methylated.

Forms part of the ribosomal stalk which helps the ribosome interact with GTP-bound translation factors. This chain is Large ribosomal subunit protein uL11, found in Janthinobacterium sp. (strain Marseille) (Minibacterium massiliensis).